The primary structure comprises 194 residues: Orotate phosphoribosyltransferase (194 aa).

A 5-phospho-alpha-D-ribose 1-diphosphate-binding site is contributed by 117-125 (EDVVTTGLS). Positions 121 and 149 each coordinate orotate.

Belongs to the purine/pyrimidine phosphoribosyltransferase family. PyrE subfamily. In terms of assembly, homodimer. Requires Mg(2+) as cofactor.

The enzyme catalyses orotidine 5'-phosphate + diphosphate = orotate + 5-phospho-alpha-D-ribose 1-diphosphate. Its pathway is pyrimidine metabolism; UMP biosynthesis via de novo pathway; UMP from orotate: step 1/2. In terms of biological role, catalyzes the transfer of a ribosyl phosphate group from 5-phosphoribose 1-diphosphate to orotate, leading to the formation of orotidine monophosphate (OMP). This Novosphingobium aromaticivorans (strain ATCC 700278 / DSM 12444 / CCUG 56034 / CIP 105152 / NBRC 16084 / F199) protein is Orotate phosphoribosyltransferase.